Consider the following 44-residue polypeptide: Large ribosomal subunit protein bL34 (44 aa).

Belongs to the bacterial ribosomal protein bL34 family.

The polypeptide is Large ribosomal subunit protein bL34 (Buchnera aphidicola subsp. Cinara cedri (strain Cc)).